The chain runs to 946 residues: Translation initiation factor IF-2 (946 aa).

Disordered regions lie at residues 58–250 (AERK…AVVI) and 301–324 (VSRD…KSLS). Low complexity-rich tracts occupy residues 102–165 (EPPQ…QPAA) and 174–185 (AQPSAPQPAAAQ). Positions 186–211 (PRPPQPPMPSRPPPAGYRPAPPPGAR) are enriched in pro residues. Residues 212–229 (PPMSAAPGAPAQPGAAAQ) are compositionally biased toward low complexity. The region spanning 445 to 614 (IRPPVVTVMG…ALQSEVLELK (170 aa)) is the tr-type G domain. The segment at 454 to 461 (GHVDHGKT) is G1. 454–461 (GHVDHGKT) contributes to the GTP binding site. Residues 479 to 483 (GITQH) form a G2 region. The tract at residues 500–503 (DTPG) is G3. GTP-binding positions include 500 to 504 (DTPGH) and 554 to 557 (NKVD). A G4 region spans residues 554–557 (NKVD). The tract at residues 590-592 (SAR) is G5.

Belongs to the TRAFAC class translation factor GTPase superfamily. Classic translation factor GTPase family. IF-2 subfamily.

It is found in the cytoplasm. Its function is as follows. One of the essential components for the initiation of protein synthesis. Protects formylmethionyl-tRNA from spontaneous hydrolysis and promotes its binding to the 30S ribosomal subunits. Also involved in the hydrolysis of GTP during the formation of the 70S ribosomal complex. The sequence is that of Translation initiation factor IF-2 from Anaeromyxobacter sp. (strain K).